Here is a 264-residue protein sequence, read N- to C-terminus: Thymidylate synthase (264 aa).

DUMP contacts are provided by residues Arg21 and 126-127; that span reads RR. The Nucleophile role is filled by Cys146. DUMP contacts are provided by residues 166 to 169, Asn177, and 207 to 209; these read RSAD and HLY. (6R)-5,10-methylene-5,6,7,8-tetrahydrofolate is bound at residue Asp169. (6R)-5,10-methylene-5,6,7,8-tetrahydrofolate is bound at residue Ala263.

Belongs to the thymidylate synthase family. Bacterial-type ThyA subfamily. Homodimer.

The protein localises to the cytoplasm. The enzyme catalyses dUMP + (6R)-5,10-methylene-5,6,7,8-tetrahydrofolate = 7,8-dihydrofolate + dTMP. The protein operates within pyrimidine metabolism; dTTP biosynthesis. Functionally, catalyzes the reductive methylation of 2'-deoxyuridine-5'-monophosphate (dUMP) to 2'-deoxythymidine-5'-monophosphate (dTMP) while utilizing 5,10-methylenetetrahydrofolate (mTHF) as the methyl donor and reductant in the reaction, yielding dihydrofolate (DHF) as a by-product. This enzymatic reaction provides an intracellular de novo source of dTMP, an essential precursor for DNA biosynthesis. The polypeptide is Thymidylate synthase (Nitrobacter hamburgensis (strain DSM 10229 / NCIMB 13809 / X14)).